The chain runs to 99 residues: Protein S100-A11 (99 aa).

Methionine 1 carries the N-acetylmethionine modification. At threonine 8 the chain carries Phosphothreonine. 2 EF-hand domains span residues 10 to 47 and 53 to 88; these read RCIESLIAIFQKHAGRDGNNTKISKTEFLIFMNTELAA and KDPGVLDRMMKKLDLDSDGQLDFQEFLNLIGGLAIA. Ca(2+) contacts are provided by asparagine 29, lysine 31, glutamate 36, aspartate 66, aspartate 68, aspartate 70, glutamine 72, and glutamate 77.

Belongs to the S-100 family. Homodimer; disulfide-linked. Post-translationally, phosphorylation at Thr-8 significantly suppresses homodimerization and promotes association with NCL/nucleolin which induces nuclear translocation.

Its subcellular location is the cytoplasm. It is found in the nucleus. Its function is as follows. Facilitates the differentiation and the cornification of keratinocytes. The sequence is that of Protein S100-A11 (S100A11) from Sus scrofa (Pig).